Here is a 219-residue protein sequence, read N- to C-terminus: 16S rRNA (adenine(1408)-N(1))-methyltransferase (219 aa).

Residues Gly-32, Asn-38, Asp-55, 87–88, 104–109, and 195–197 contribute to the S-adenosyl-L-methionine site; these read AE, LFPWGT, and SLW.

It belongs to the methyltransferase superfamily. Kanamycin-apramycin resistance family.

The catalysed reaction is adenosine(1408) in 16S rRNA + S-adenosyl-L-methionine = N(1)-methyladenosine(1408) in 16S rRNA + S-adenosyl-L-homocysteine + H(+). In terms of biological role, specifically methylates the N(1) position of adenine 1408 in 16S rRNA. Confers resistance to various aminoglycosides, including kanamycin, neomycin, apramycin, ribostamycin and gentamicin. Methylates only fully assembled 30S subunits. This is 16S rRNA (adenine(1408)-N(1))-methyltransferase (npmA) from Escherichia coli.